The primary structure comprises 170 residues: 4-hydroxyphenylacetate 3-monooxygenase reductase component (170 aa).

The protein belongs to the non-flavoprotein flavin reductase family. HpaC subfamily. Monomer. HPA 3-hydroxylase consists of a reductase component HpaC and an oxygenase component HpaB. Some form of interactions between the reductase and the oxygenase facilitate the transfer of FADH(-) to the oxygenase in P.aeruginosa, although interactions are not required in other species.

It carries out the reaction FADH2 + NAD(+) = FAD + NADH + 2 H(+). It participates in aromatic compound metabolism; 4-hydroxyphenylacetate degradation; pyruvate and succinate semialdehyde from 4-hydroxyphenylacetate: step 1/7. Its activity is regulated as follows. The rate of FAD reduction is independent of the presence of HPA, demonstrating that, in contrast to HPAH from A.baumannii, the activity of the HPAH reductase is not allosterically regulated by the substrate. Its function is as follows. Reductase component of the 4-hydroxyphenylacetate (HPA) 3-hydroxylase. Catalyzes the reduction of FAD by NADH. The reduced flavin is then transferred to the oxygenase component HpaB. Is also able to reduce FMN and riboflavin, but preferentially binds FAD. Has no activity with NADPH as the reductant. This Pseudomonas aeruginosa (strain ATCC 15692 / DSM 22644 / CIP 104116 / JCM 14847 / LMG 12228 / 1C / PRS 101 / PAO1) protein is 4-hydroxyphenylacetate 3-monooxygenase reductase component.